Reading from the N-terminus, the 524-residue chain is Indoleacetamide hydrolase (524 aa).

Basic residues-rich tracts occupy residues 1–26 (MAKKTASKKKSVSRKVTKTSSKKATA) and 34–54 (AAKKSVKKAAPRKSATARRPK). A disordered region spans residues 1–56 (MAKKTASKKKSVSRKVTKTSSKKATARKGAVAKAAKKSVKKAAPRKSATARRPKGP). Active-site charge relay system residues include Lys-133 and Ser-208. The active-site Acyl-ester intermediate is the Ser-232.

It belongs to the amidase family.

The protein operates within plant hormone metabolism; auxin biosynthesis. Functionally, hydrolyzes indole-3-acetamide (IAM) into indole-3-acetic acid (IAA). In Bradyrhizobium diazoefficiens (strain JCM 10833 / BCRC 13528 / IAM 13628 / NBRC 14792 / USDA 110), this protein is Indoleacetamide hydrolase (bam).